Consider the following 420-residue polypeptide: Histidine--tRNA ligase (420 aa).

The protein belongs to the class-II aminoacyl-tRNA synthetase family. Homodimer.

The protein resides in the cytoplasm. It carries out the reaction tRNA(His) + L-histidine + ATP = L-histidyl-tRNA(His) + AMP + diphosphate + H(+). In Macrococcus caseolyticus (strain JCSC5402) (Macrococcoides caseolyticum), this protein is Histidine--tRNA ligase.